The following is a 614-amino-acid chain: Putative ankyrin repeat protein RBE_0997 (614 aa).

9 ANK repeats span residues 3 to 32 (KDEE…DPNI), 36 to 65 (DDKP…NPNA), 69 to 98 (DGEP…DPNL), 102 to 131 (RKNT…NLNA), 135 to 164 (SGYP…NPNL), 168 to 197 (DGSP…NVEA), 201 to 231 (DGNT…DKEK), 239 to 268 (NGET…TVNI), and 272 to 301 (AGYT…ELKE). The Glutamine amidotransferase type-1 domain occupies 348–580 (NVEDIDYRKI…VQSAETFMNK (233 aa)). Cys-444 functions as the Nucleophile in the catalytic mechanism. Active-site residues include His-547 and Glu-549.

This is Putative ankyrin repeat protein RBE_0997 from Rickettsia bellii (strain RML369-C).